Consider the following 132-residue polypeptide: Sec-independent protein translocase protein TatB (132 aa).

Residues 2 to 22 (FDGIGFMELLLIGILGLVVLG) form a helical membrane-spanning segment. The interval 68–132 (ENQGLKDLSP…VSANPDKSNR (65 aa)) is disordered. Residues 102–122 (TPSASSSAPSESTPSEAPTAE) show a composition bias toward low complexity.

It belongs to the TatB family. As to quaternary structure, the Tat system comprises two distinct complexes: a TatABC complex, containing multiple copies of TatA, TatB and TatC subunits, and a separate TatA complex, containing only TatA subunits. Substrates initially bind to the TatABC complex, which probably triggers association of the separate TatA complex to form the active translocon.

It is found in the cell inner membrane. Its function is as follows. Part of the twin-arginine translocation (Tat) system that transports large folded proteins containing a characteristic twin-arginine motif in their signal peptide across membranes. Together with TatC, TatB is part of a receptor directly interacting with Tat signal peptides. TatB may form an oligomeric binding site that transiently accommodates folded Tat precursor proteins before their translocation. The polypeptide is Sec-independent protein translocase protein TatB (Shewanella woodyi (strain ATCC 51908 / MS32)).